The following is a 444-amino-acid chain: Glycine receptor subunit alphaZ1 (444 aa).

The N-terminal stretch at 1-24 (MFALGIYLWETIVFFSLAASQQAA) is a signal peptide. At 25–246 (ARKAASPMPP…RFHLERQMGY (222 aa)) the chain is on the extracellular side. Asn-62 carries N-linked (GlcNAc...) asparagine glycosylation. 2 residues coordinate glycine: Arg-89 and Ser-153. An intrachain disulfide couples Cys-162 to Cys-176. The Zn(2+) site is built by Glu-216 and Asp-218. Cys-222 and Cys-233 are disulfide-bonded. 226–231 (YNTGKF) is a binding site for strychnine. A glycine-binding site is contributed by Thr-228. His-239 serves as a coordination point for Zn(2+). A helical membrane pass occupies residues 247 to 268 (YLIQMYIPSLLIVILSWVSFWI). Residues 269–273 (NMDAA) lie on the Cytoplasmic side of the membrane. Residues 274-294 (PARVGLGITTVLTMTTQSSGS) traverse the membrane as a helical segment. Topologically, residues 295–305 (RASLPKVSYVK) are extracellular. The helical transmembrane segment at 306-326 (AIDIWMAVCLLFVFSALLEYA) threads the bilayer. Residues 327–412 (AVNFIARQHK…FISRAKRIDT (86 aa)) lie on the Cytoplasmic side of the membrane. A helical transmembrane segment spans residues 413 to 433 (VSRVAFPLVFLIFNIFYWITY). At 434-444 (KIIRSEDIHKQ) the chain is on the extracellular side.

This sequence belongs to the ligand-gated ion channel (TC 1.A.9) family. Glycine receptor (TC 1.A.9.3) subfamily. GLRA1 sub-subfamily. In terms of assembly, homopentamer (in vitro). Heteropentamer composed of glra1 and glrb. Both homopentamers and heteropentamers form functional ion channels. Interacts with glrb. In terms of tissue distribution, expressed in brain.

The protein resides in the postsynaptic cell membrane. The protein localises to the synapse. Its subcellular location is the perikaryon. It is found in the cell projection. It localises to the dendrite. The protein resides in the cell membrane. It catalyses the reaction chloride(in) = chloride(out). Its activity is regulated as follows. Activated by glycine and taurine. Inhibited by strychnine. Allosterically activated by ivermectin. Inhibited by picrotoxinin. Strychnine binding locks the channel in a closed conformation and prevents channel opening in response to extracellular glycine. Can also be activated by GABA and inhibited by bicuculline, but this requires heterologous expression in human cells. Functionally, subunit of heteromeric glycine-gated chloride channels. Plays an important role in the down-regulation of neuronal excitability. Contributes to the generation of inhibitory postsynaptic currents. Channel activity is potentiated by ethanol. The sequence is that of Glycine receptor subunit alphaZ1 (glra1) from Danio rerio (Zebrafish).